The primary structure comprises 205 residues: MKLNKKHLVAILSVLSLSIIVVPLLTSCTGDIPELNPAEIINTLFPNVWVFIAQVIAMCVVFSLVLWLVWKPTNKMLDKRREYIAKEITDAENAKQEALQYLENAKSEHLAAQAQTLEIIAKAKSESLTLRESLEKEAREAADKIISSAKISIANERRENLERLQSEAREAAYIAAEALMKKELSREDNDKLVDQFIKELENNEK.

An N-terminal signal peptide occupies residues 1-27; sequence MKLNKKHLVAILSVLSLSIIVVPLLTS. Cys-28 carries N-palmitoyl cysteine lipidation. Cys-28 is lipidated: S-diacylglycerol cysteine. A helical membrane pass occupies residues 48-68; sequence VWVFIAQVIAMCVVFSLVLWL.

Belongs to the ATPase B chain family. F-type ATPases have 2 components, F(1) - the catalytic core - and F(0) - the membrane proton channel. F(1) has five subunits: alpha(3), beta(3), gamma(1), delta(1), epsilon(1). F(0) has three main subunits: a(1), b(2) and c(10-14). The alpha and beta chains form an alternating ring which encloses part of the gamma chain. F(1) is attached to F(0) by a central stalk formed by the gamma and epsilon chains, while a peripheral stalk is formed by the delta and b chains.

The protein resides in the cell membrane. Functionally, f(1)F(0) ATP synthase produces ATP from ADP in the presence of a proton or sodium gradient. F-type ATPases consist of two structural domains, F(1) containing the extramembraneous catalytic core and F(0) containing the membrane proton channel, linked together by a central stalk and a peripheral stalk. During catalysis, ATP synthesis in the catalytic domain of F(1) is coupled via a rotary mechanism of the central stalk subunits to proton translocation. Its function is as follows. Component of the F(0) channel, it forms part of the peripheral stalk, linking F(1) to F(0). The chain is ATP synthase subunit b from Ureaplasma parvum serovar 3 (strain ATCC 27815 / 27 / NCTC 11736).